Here is a 198-residue protein sequence, read N- to C-terminus: Probable opine utilization operon repressor (198 aa).

Its pathway is opine metabolism; mannopine biosynthesis [regulation]. In terms of biological role, possible repressor for genes for mannityl-opine utilization and / or plasmid conjugative transfer. This chain is Probable opine utilization operon repressor (opnR), found in Rhizobium rhizogenes (Agrobacterium rhizogenes).